A 374-amino-acid chain; its full sequence is 4-hydroxy-3-methylbut-2-en-1-yl diphosphate synthase (flavodoxin) (374 aa).

The [4Fe-4S] cluster site is built by Cys-270, Cys-273, Cys-305, and Glu-312.

Belongs to the IspG family. The cofactor is [4Fe-4S] cluster.

The enzyme catalyses (2E)-4-hydroxy-3-methylbut-2-enyl diphosphate + oxidized [flavodoxin] + H2O + 2 H(+) = 2-C-methyl-D-erythritol 2,4-cyclic diphosphate + reduced [flavodoxin]. It participates in isoprenoid biosynthesis; isopentenyl diphosphate biosynthesis via DXP pathway; isopentenyl diphosphate from 1-deoxy-D-xylulose 5-phosphate: step 5/6. Functionally, converts 2C-methyl-D-erythritol 2,4-cyclodiphosphate (ME-2,4cPP) into 1-hydroxy-2-methyl-2-(E)-butenyl 4-diphosphate. In Vibrio cholerae serotype O1 (strain ATCC 39315 / El Tor Inaba N16961), this protein is 4-hydroxy-3-methylbut-2-en-1-yl diphosphate synthase (flavodoxin).